The primary structure comprises 405 residues: CMP-sialic acid transporter 4 (405 aa).

Over 1 to 43 (MQRNGVMECSVCHSKVVAPSPRSVSRAYDKHRSKISSKYRALN) the chain is Cytoplasmic. The chain crosses the membrane as a helical span at residues 44-64 (FLLVSGDCILVGLQPILVFMS). Residues 65–74 (KVDGKFQFSP) lie on the Lumenal side of the membrane. The chain crosses the membrane as a helical span at residues 75–95 (ISVNFLTEVTKVIFAIVMLII). At 96–121 (QSRKQKVGEKPLLSLSTFVQAARNNA) the chain is on the cytoplasmic side. The chain crosses the membrane as a helical span at residues 122–142 (LLAVPALLYAINNYLKFIMQL). Residue Tyr-143 is a topological domain, lumenal. Residues 144–164 (FSPATVKMLSNLKVLVIAILL) form a helical membrane-spanning segment. Topologically, residues 165–171 (KFIMRRK) are cytoplasmic. A helical transmembrane segment spans residues 172 to 192 (FSIIQWEALALLLIGISVNQL). Residues 193–203 (SSIPDGTKSFG) are Lumenal-facing. The chain crosses the membrane as a helical span at residues 204-224 (LAVTTIAYIYTLIFVTVPSLA). Over 225–244 (SVYNEYALKSQFDTSIYLQN) the chain is Cytoplasmic. Residues 245–265 (LFLYGYGAIFNFLGILGTVIF) form a helical membrane-spanning segment. Residues 266-281 (QGPESFDILQGHSRAT) lie on the Lumenal side of the membrane. A helical membrane pass occupies residues 282–302 (MFLICNNAAQGILSSFFFKYA). Topologically, residues 303-322 (DTILKKYSSTVATIFTGLAS) are cytoplasmic. A helical transmembrane segment spans residues 323-343 (AAFLGHTLTVNFLLGISIVFI). The Lumenal segment spans residues 344-405 (SMHQFFSPLA…TDERKPLLPI (62 aa)). The tract at residues 386-405 (AADDASHLTSTDERKPLLPI) is disordered. A compositionally biased stretch (basic and acidic residues) spans 389 to 405 (DASHLTSTDERKPLLPI).

The protein belongs to the nucleotide-sugar transporter family. CMP-Sialate:CMP antiporter (TC 2.A.7.12) subfamily.

It localises to the golgi apparatus membrane. In terms of biological role, sugar transporter involved in the transport of CMP-sialic acid from the cytoplasm into the Golgi. May transport important nucleotide sugars such as CMP-Kdo (2-keto-3-deoxy-D-manno-octulosonic acid) in physiological conditions. The protein is CMP-sialic acid transporter 4 of Oryza sativa subsp. indica (Rice).